The primary structure comprises 313 residues: Zinc transporter ZitB (313 aa).

At 1–20 (MAHSHSHTSSHLPEDNNARR) the chain is on the cytoplasmic side. Residues 21–41 (LLYAFGVTAGFMLVEVVGGFL) traverse the membrane as a helical segment. At 42-47 (SGSLAL) the chain is on the periplasmic side. The helical transmembrane segment at 48–68 (LADAGHMLTDTAALLFALLAV) threads the bilayer. Over 69 to 89 (QFSRRPPTIRHTFGWLRLTTL) the chain is Cytoplasmic. A helical membrane pass occupies residues 90-110 (AAFVNAIALVVITILIVWEAI). The Periplasmic portion of the chain corresponds to 111–121 (ERFRTPRPVEG). A helical transmembrane segment spans residues 122–142 (GMMMAIAVAGLLANILSFWLL). Residues 143–159 (HHGSEEKNLNVRAAALH) lie on the Cytoplasmic side of the membrane. Residues 160–180 (VLGDLLGSVGAIIAALIIIWT) traverse the membrane as a helical segment. G181 is a topological domain (periplasmic). A helical membrane pass occupies residues 182–202 (WTPADPILSILVSLLVLRSAW). Residues 203-313 (RLLKDSVNEL…GVSGHSHHHH (111 aa)) are Cytoplasmic-facing.

The protein belongs to the cation diffusion facilitator (CDF) transporter (TC 2.A.4) family. SLC30A subfamily.

It localises to the cell inner membrane. In terms of biological role, involved in zinc efflux across the cytoplasmic membrane, thus reducing zinc accumulation in the cytoplasm and rendering bacteria more resistant to zinc. It may contribute to zinc homeostasis at low concentrations of zinc. The polypeptide is Zinc transporter ZitB (zitB) (Shigella flexneri).